A 297-amino-acid chain; its full sequence is Bifunctional protein FolD (297 aa).

Residues 164 to 166 (GRS), Ser-193, and Ile-234 each bind NADP(+).

Belongs to the tetrahydrofolate dehydrogenase/cyclohydrolase family. As to quaternary structure, homodimer.

The catalysed reaction is (6R)-5,10-methylene-5,6,7,8-tetrahydrofolate + NADP(+) = (6R)-5,10-methenyltetrahydrofolate + NADPH. It carries out the reaction (6R)-5,10-methenyltetrahydrofolate + H2O = (6R)-10-formyltetrahydrofolate + H(+). It participates in one-carbon metabolism; tetrahydrofolate interconversion. In terms of biological role, catalyzes the oxidation of 5,10-methylenetetrahydrofolate to 5,10-methenyltetrahydrofolate and then the hydrolysis of 5,10-methenyltetrahydrofolate to 10-formyltetrahydrofolate. The protein is Bifunctional protein FolD of Halobacterium salinarum (strain ATCC 700922 / JCM 11081 / NRC-1) (Halobacterium halobium).